Here is a 251-residue protein sequence, read N- to C-terminus: Probable transcriptional regulatory protein cgR_1708 (251 aa).

A disordered region spans residues 1–22; sequence MAGHSKWATTKHKKAANDAKRG.

The protein belongs to the TACO1 family.

The protein localises to the cytoplasm. The polypeptide is Probable transcriptional regulatory protein cgR_1708 (Corynebacterium glutamicum (strain R)).